The chain runs to 231 residues: Protoporphyrinogen IX dehydrogenase [quinone] (231 aa).

Residues 8 to 178 (CLMLYSTTDG…AVRRFASDFA (171 aa)) form the Flavodoxin-like domain. FMN contacts are provided by residues 14–18 (TTDGH) and 90–158 (FFSV…ETDS). A helical membrane pass occupies residues 208 to 228 (CLLAIVGMSAAVIVGIRIIAA).

The protein belongs to the HemG family. Requires FMN as cofactor.

Its subcellular location is the membrane. It catalyses the reaction protoporphyrinogen IX + 3 a menaquinone = protoporphyrin IX + 3 a menaquinol. The enzyme catalyses protoporphyrinogen IX + 3 a ubiquinone = protoporphyrin IX + 3 a ubiquinol. It carries out the reaction protoporphyrinogen IX + 3 a quinone = protoporphyrin IX + 3 a quinol. The protein operates within porphyrin-containing compound metabolism; protoporphyrin-IX biosynthesis; protoporphyrin-IX from protoporphyrinogen-IX: step 1/1. In E.coli extracts under anerobic conditions catalyzes the 6-electron oxidation of protoporphyrinogen IX to form protoporphyrin IX, transferring electrons to fumarate reductase, presumably via menaquinone. In vitro under aerobic conditions forms protoporphyrin IX using ubiquinone as an electron acceptor. Complements an E.coli hemG deletion, allowing normal growth in vivo. This chain is Protoporphyrinogen IX dehydrogenase [quinone], found in Leishmania major.